We begin with the raw amino-acid sequence, 148 residues long: Large ribosomal subunit protein bL19 (148 aa).

The protein belongs to the bacterial ribosomal protein bL19 family.

Functionally, this protein is located at the 30S-50S ribosomal subunit interface and may play a role in the structure and function of the aminoacyl-tRNA binding site. This chain is Large ribosomal subunit protein bL19, found in Beijerinckia indica subsp. indica (strain ATCC 9039 / DSM 1715 / NCIMB 8712).